We begin with the raw amino-acid sequence, 406 residues long: Succinylornithine transaminase (406 aa).

Position 252 is an N6-(pyridoxal phosphate)lysine (Lys252).

Belongs to the class-III pyridoxal-phosphate-dependent aminotransferase family. AstC subfamily. Pyridoxal 5'-phosphate is required as a cofactor.

The enzyme catalyses N(2)-succinyl-L-ornithine + 2-oxoglutarate = N-succinyl-L-glutamate 5-semialdehyde + L-glutamate. The protein operates within amino-acid degradation; L-arginine degradation via AST pathway; L-glutamate and succinate from L-arginine: step 3/5. In terms of biological role, catalyzes the transamination of N(2)-succinylornithine and alpha-ketoglutarate into N(2)-succinylglutamate semialdehyde and glutamate. Can also act as an acetylornithine aminotransferase. The sequence is that of Succinylornithine transaminase from Escherichia coli O7:K1 (strain IAI39 / ExPEC).